A 235-amino-acid chain; its full sequence is Probable flavin-dependent thymidylate synthase (235 aa).

Residues 1–229 enclose the ThyX domain; that stretch reads MKVQLIASTI…PNTYQDIPTE (229 aa). FAD contacts are provided by residues Ser-70 and 93–95; that span reads RHR. Residues 90–93, 103–105, and Arg-168 each bind dUMP; these read ELER and SQR. Residues 93–103 carry the ThyX motif motif; the sequence is RHRHLSFSVVS. 184-186 lines the FAD pocket; the sequence is NHR. Position 195 (Arg-195) interacts with dUMP. The Involved in ionization of N3 of dUMP, leading to its activation role is filled by Arg-195.

It belongs to the thymidylate synthase ThyX family. Homotetramer. FAD serves as cofactor.

The catalysed reaction is dUMP + (6R)-5,10-methylene-5,6,7,8-tetrahydrofolate + NADPH + H(+) = dTMP + (6S)-5,6,7,8-tetrahydrofolate + NADP(+). It participates in pyrimidine metabolism; dTTP biosynthesis. In terms of biological role, catalyzes the reductive methylation of 2'-deoxyuridine-5'-monophosphate (dUMP) to 2'-deoxythymidine-5'-monophosphate (dTMP) while utilizing 5,10-methylenetetrahydrofolate (mTHF) as the methyl donor, and NADPH and FADH(2) as the reductant. This is Probable flavin-dependent thymidylate synthase (48) from Mycobacterium (Mycobacteriophage D29).